The chain runs to 347 residues: Selenide, water dikinase (347 aa).

Residue cysteine 17 is part of the active site. ATP contacts are provided by residues lysine 20 and 48–50; that span reads TRD. Aspartate 51 provides a ligand contact to Mg(2+). ATP contacts are provided by residues aspartate 68, aspartate 91, and 139 to 141; that span reads GHS. Aspartate 91 serves as a coordination point for Mg(2+). Residue aspartate 227 participates in Mg(2+) binding.

Belongs to the selenophosphate synthase 1 family. Class I subfamily. Homodimer. Mg(2+) is required as a cofactor.

The catalysed reaction is hydrogenselenide + ATP + H2O = selenophosphate + AMP + phosphate + 2 H(+). Synthesizes selenophosphate from selenide and ATP. In Escherichia coli O157:H7, this protein is Selenide, water dikinase.